Reading from the N-terminus, the 587-residue chain is ASI1-immunoprecipitated protein 3 (587 aa).

The disordered stretch occupies residues 1–118; that stretch reads MVLSRRFAQV…NVTGKGKGKR (118 aa). The span at 66-98 shows a compositional bias: acidic residues; it reads EDEDMAEGDDDQAEEETNPEAEEEEDEEEEEKP. Positions 129–248 constitute a BAH domain; the sequence is NTYDLEVPVL…TVEKKLWKLT (120 aa). The TFIIS central domain occupies 344 to 493; it reads HRDKCLGKLL…RMQMTSVRCS (150 aa). Disordered regions lie at residues 371-396 and 539-587; these read EAKV…GKDE and TDKP…KKPE. Residues 560 to 570 show a composition bias toward basic and acidic residues; the sequence is ETNKPKDEALK. Positions 571-581 are enriched in polar residues; the sequence is TNDSNADNNPE.

In terms of assembly, interacts with MOM1. Component of the ASI1-AIPP1-EDM2 (AAE) RNA regulatory complex composed of at least AIPP1/EDM3, ASI1 and EDM2 and may contain CPL2, AIPP2 and AIPP3/BDT1. Part of the BAH-PHD bivalent histone reader complex that contains AIPP2, PAIPP2 and AIPP3/BDT1; the BAH-PHD module associates with CPL2 to form the BAH-PHD-CPL2 complex (BPC) for transcriptional repression. Binds directly to CPL2, PHD1, PAIPP2/PHD2, AIPP2/PHD3, PHD4, PHD5 and PHD6. In terms of tissue distribution, expressed ubiquitously.

It is found in the nucleus. Functionally, transcriptional repressor. Together with PHD finger-containing proteins (e.g. PHD1, PAIPP2/PHD2, AIPP2/PHD3, PHD4, PHD5 and PHD6), cooperates to form a BAH-PHD bivalent histone reader complex able to read histone H3 lysine 27 trimethylation (H3K27me3) and low-methylated H3K4 histone marks in order to regulate transcription, especially to prevent early flowering; H3K27me3 reader of this complex. CPL2 is subsequently recruited to form a BAH-PHD-CPL2 complex (BPC) in order to silence several H3K27me3 and low-methylated H3K4 enriched loci, including AGO5, via the phosphorylation state-dependent inhibition of Pol II release from the transcriptional start site (e.g. Ser5P-Pol II dephosphorylation). The BPC complex represses flowering by inhibiting the expression of several genes, including AGL6, FT, FUL and SOC1. Prevents the accumulation of intronic heterochromatin-containing genes (e.g. IBM1, At3g05410 and RPP7). Seems to not be involved in vernalization establishment, by contrast to orthologs in grass plants. The chain is ASI1-immunoprecipitated protein 3 from Arabidopsis thaliana (Mouse-ear cress).